Here is a 432-residue protein sequence, read N- to C-terminus: Cyclic 2,3-diphosphoglycerate synthetase (432 aa).

The protein belongs to the cyclic 2,3-diphosphoglycerate synthetase family.

Its subcellular location is the cytoplasm. The enzyme catalyses (2R)-2,3-bisphosphoglycerate + ATP + H(+) = cyclic (2R)-2,3-bisphosphoglycerate + ADP + phosphate. In terms of biological role, catalyzes the formation of cyclic 2,3-diphosphoglycerate (cDPG) by formation of an intramolecular phosphoanhydride bond at the expense of ATP. The sequence is that of Cyclic 2,3-diphosphoglycerate synthetase from Thermococcus onnurineus (strain NA1).